The sequence spans 98 residues: Histone H4-1 (98 aa).

Over residues 1–14 (MGGKGGKGGKGLGK) the composition is skewed to gly residues. The interval 1-20 (MGGKGGKGGKGLGKVGAKKR) is disordered.

Belongs to the histone H4 family. In terms of assembly, the nucleosome is a histone octamer containing two molecules each of H2A, H2B, H3 and H4 assembled in one H3-H4 heterotetramer and two H2A-H2B heterodimers. The octamer wraps approximately 147 bp of DNA.

Its subcellular location is the nucleus. It localises to the chromosome. Core component of nucleosome. Nucleosomes wrap and compact DNA into chromatin, limiting DNA accessibility to the cellular machineries which require DNA as a template. Histones thereby play a central role in transcription regulation, DNA repair, DNA replication and chromosomal stability. DNA accessibility is regulated via a complex set of post-translational modifications of histones, also called histone code, and nucleosome remodeling. This Blepharisma japonicum protein is Histone H4-1.